The primary structure comprises 43 residues: Delta/kappa-actitoxin-Avd4a (43 aa).

Intrachain disulfides connect C4–C39, C6–C32, and C22–C40.

It belongs to the sea anemone type 3 (BDS) potassium channel toxin family.

It is found in the secreted. Its subcellular location is the nematocyst. Functionally, acts as a gating modifier on both Kv and Nav ion channels, and also acts on blood pressure. Voltage-dependently inhibits voltage-gated potassium channels Kv3 (Kv3.1/KCNC1, Kv3.2/KCNC2 and Kv3.4/KCNC4) and slows inactivation of the voltage-gated sodium channel Nav1.7/SCN9A. Inhibits all Kv3.1, Kv3.2 and Kv3.4 by about 50% when tested at a voltage of +40 mV (45%, 48% and 56%, respectively). May act by binding residues in voltage-sensing domains S3b and S4 of Kv3. On sodium channel, tests have been done on human Nav1.7/SCN9A (expressed in HEK293 cells) (EC(50)=3 nM) and rat SCG neurons that mostly carry Nav1.7 channels (EC(50)=300 nM). This toxin also reduces blood pressure. In Anemonia sulcata (Mediterranean snakelocks sea anemone), this protein is Delta/kappa-actitoxin-Avd4a.